The following is a 1165-amino-acid chain: Valine--tRNA ligase (1165 aa).

Positions 43-53 (PNVTGSLHMGH) match the 'HIGH' region motif. Residues 800–804 (KMSKT) carry the 'KMSKS' region motif. Lys-803 is a binding site for ATP. 2 coiled-coil regions span residues 1001–1032 (KNED…SDLQ) and 1097–1165 (HVDL…VLRS).

It belongs to the class-I aminoacyl-tRNA synthetase family. ValS type 1 subfamily. In terms of assembly, monomer.

It localises to the cytoplasm. The catalysed reaction is tRNA(Val) + L-valine + ATP = L-valyl-tRNA(Val) + AMP + diphosphate. Catalyzes the attachment of valine to tRNA(Val). As ValRS can inadvertently accommodate and process structurally similar amino acids such as threonine, to avoid such errors, it has a 'posttransfer' editing activity that hydrolyzes mischarged Thr-tRNA(Val) in a tRNA-dependent manner. The chain is Valine--tRNA ligase from Aquifex aeolicus (strain VF5).